The chain runs to 177 residues: MSDLTTIARPYAKAAFDFAVEKQQLGHWSQMLAFTAEVAKNEQMHELLTSSGSANKLAEIFIAVCGEQLDGHGQNLIKVMAENGRLLAIPALYEHFAVLKQEHEKKVDVEVISATELSEQQRSEIGSKLEQRLERKVQLNCSVDETLLGGVIIRAGDLVIDNSARGRLKRLSDALQS.

This sequence belongs to the ATPase delta chain family. As to quaternary structure, F-type ATPases have 2 components, F(1) - the catalytic core - and F(0) - the membrane proton channel. F(1) has five subunits: alpha(3), beta(3), gamma(1), delta(1), epsilon(1). F(0) has three main subunits: a(1), b(2) and c(10-14). The alpha and beta chains form an alternating ring which encloses part of the gamma chain. F(1) is attached to F(0) by a central stalk formed by the gamma and epsilon chains, while a peripheral stalk is formed by the delta and b chains.

It localises to the cell inner membrane. Its function is as follows. F(1)F(0) ATP synthase produces ATP from ADP in the presence of a proton or sodium gradient. F-type ATPases consist of two structural domains, F(1) containing the extramembraneous catalytic core and F(0) containing the membrane proton channel, linked together by a central stalk and a peripheral stalk. During catalysis, ATP synthesis in the catalytic domain of F(1) is coupled via a rotary mechanism of the central stalk subunits to proton translocation. In terms of biological role, this protein is part of the stalk that links CF(0) to CF(1). It either transmits conformational changes from CF(0) to CF(1) or is implicated in proton conduction. The polypeptide is ATP synthase subunit delta (Vibrio cholerae serotype O1 (strain ATCC 39541 / Classical Ogawa 395 / O395)).